Here is a 360-residue protein sequence, read N- to C-terminus: DNA replication and repair protein RecF (360 aa).

30 to 37 is a binding site for ATP; that stretch reads GHNGSGKT.

It belongs to the RecF family.

The protein localises to the cytoplasm. In terms of biological role, the RecF protein is involved in DNA metabolism; it is required for DNA replication and normal SOS inducibility. RecF binds preferentially to single-stranded, linear DNA. It also seems to bind ATP. The sequence is that of DNA replication and repair protein RecF from Actinobacillus pleuropneumoniae serotype 5b (strain L20).